The following is a 317-amino-acid chain: Neurogenic differentiation factor 6-B (317 aa).

2 disordered regions span residues 1–90 (MLTV…ERSR) and 297–317 (DLHPRSQSFQSQDELNTGYHN). Residues 37–56 (EAEDDNTDREEEEEREEDEN) show a composition bias toward acidic residues. Positions 59–69 (PKKKGPRKKKS) are enriched in basic residues. The short motif at 65-70 (RKKKSE) is the Nuclear localization signal element. A compositionally biased stretch (basic and acidic residues) spans 70–90 (EGRGDRVKMRRQEANARERSR). The region spanning 78–130 (MRRQEANARERSRMHGLNDALESLRKVVPCYSKTQKLSKIETLRLAKNYIWAL) is the bHLH domain. Polar residues predominate over residues 301–317 (RSQSFQSQDELNTGYHN).

In terms of assembly, efficient DNA binding requires dimerization with another bHLH protein. In terms of tissue distribution, embryonic olfactory bulbs and olfactory placodes. In adult, expressed in brain and eye.

The protein localises to the nucleus. Differentiation factor required for neurogenesis. Does not act as an upstream activator of isl1. This is Neurogenic differentiation factor 6-B from Danio rerio (Zebrafish).